Reading from the N-terminus, the 241-residue chain is Serine protease 58 (241 aa).

The signal sequence occupies residues 1 to 17 (MKFILLWALLNLTVALA). Residues 18–239 (FNPDYTVSST…YIPWIENVIQ (222 aa)) enclose the Peptidase S1 domain. Cysteines 41 and 57 form a disulfide. Residues H56 and D101 each act as charge relay system in the active site. Disulfide bonds link C133–C201, C165–C180, and C191–C215. Residues N156 and N173 are each glycosylated (N-linked (GlcNAc...) asparagine). The active-site Charge relay system is S195.

It belongs to the peptidase S1 family.

The protein localises to the secreted. The catalysed reaction is Preferential cleavage: Arg-|-Xaa, Lys-|-Xaa.. In Homo sapiens (Human), this protein is Serine protease 58 (PRSS58).